The following is a 456-amino-acid chain: Neurexin-3-beta (456 aa).

The N-terminal stretch at Met-1–Ser-35 is a signal peptide. Residues Ser-36–Thr-381 are Extracellular-facing. The interval Ser-41–Ser-63 is disordered. Basic residues predominate over residues His-52 to Ser-63. The 201-residue stretch at Ala-82–Val-282 folds into the Laminin G-like domain. 2 residues coordinate Ca(2+): Asp-134 and Ile-151. The N-linked (GlcNAc...) asparagine glycan is linked to Asn-181. Positions 233 and 235 each coordinate Ca(2+). N-linked (GlcNAc...) asparagine glycans are attached at residues Asn-279 and Asn-323. The segment at Ala-316–Ala-340 is disordered. The span at Ser-325–Ala-340 shows a compositional bias: polar residues. Residue Ser-339 is glycosylated (O-linked (Xyl...) (heparan sulfate) serine). The helical transmembrane segment at Gly-382–Met-402 threads the bilayer. Residues Tyr-403–Val-456 are Cytoplasmic-facing. The segment at Asn-424–Val-456 is disordered.

Belongs to the neurexin family. As to quaternary structure, weakly interacts with CBLN1 and CBLN2. Very weak binding, if any, to CBLN4. Specific isoforms bind neuroligins NLGN1, NLGN2 and NLGN3. Interacts with CLSTN3. In terms of processing, processed by alpha-secretase leading to the formation of an extracellular soluble protein as well as a C-terminal membrane-embedded fragment (CTF). Proteolysis of these CTFs by gamma-secretase releases intracellular domains (ICDs) and extracellular peptides. Post-translationally, O-glycosylated; contains heparan sulfate. Heparan sulfate attachment is required for synapse development by mediating interactions with neuroligins.

The protein localises to the presynaptic cell membrane. The protein resides in the secreted. Neuronal cell surface protein that may be involved in cell recognition and cell adhesion. May mediate intracellular signaling. Functions as part of a trans-synaptic complex by binding to cerebellins and postsynaptic GRID1. This interaction helps regulate the activity of NMDA and AMPA receptors at hippocampal synapses without affecting synapse formation. NRXN3B-CBLN2-GRID1 complex transduce presynaptic signals into postsynaptic AMPAR response. This Bos taurus (Bovine) protein is Neurexin-3-beta (NRXN3).